Consider the following 141-residue polypeptide: Ly6/PLAUR domain-containing protein 1 (141 aa).

Residues 1 to 20 (MWVLGIAATFCGLFWLPGLA) form the signal peptide. 6 disulfide bridges follow: C25–C54, C28–C37, C46–C71, C77–C100, C88–C97, and C101–C106. In terms of domain architecture, UPAR/Ly6 spans 25-108 (CYQCEEFQLN…SCCNTPLCNG (84 aa)). A glycan (N-linked (GlcNAc...) asparagine) is linked at N45. A lipid anchor (GPI-anchor amidated glycine) is attached at G115. The propeptide at 116–141 (SSASAIRPELFTTVLFFNLALCLAHC) is removed in mature form.

As to quaternary structure, interacts with CHRNA4 and nAChRs containing alpha-4:beta-2 (CHRNA4:CHRNB2) and alpha-7 (CHRNA7) subunits.

The protein localises to the cell membrane. Believed to act as a modulator of nicotinic acetylcholine receptors (nAChRs) activity. In vitro increases receptor desensitization and decreases affinity for ACh of alpha-4:beta-2-containing nAChRs. May play a role in the intracellular trafficking of alpha-4:beta-2 and alpha-7-containing nAChRs and may inhibit their expression at the cell surface. May be involved in the control of anxiety. This is Ly6/PLAUR domain-containing protein 1 (Lypd1) from Rattus norvegicus (Rat).